Here is a 294-residue protein sequence, read N- to C-terminus: MASNLTVNVHPGVYMNVVDTHMRRTKSSAKNTGQEKCMGTLMGYYEKGSIQVTNCFAIPFNESNDDLEIDDQFNQQMISALKKTSPNEQPVGWFLTTSDITSSCLIYHDYYVRVITEASARRESPPIVVLTIDTTFSGDMSKRMPVRAYLRSKAGIPGAAGPHCAIFNPLRVELAAFPGELVAMQLIEKALDSRRREATLESGLEQLETSTAQMIEWLERMLHYVEDVNKNGEKPGDAQIGRQLMDIVTASSNNMQPEKLDTLVKNTLRDYVMVSYLAKLTQTQLQVHERLVSA.

Residues 7 to 155 (VNVHPGVYMN…VRAYLRSKAG (149 aa)) form the MPN domain.

Belongs to the eIF-3 subunit F family. Component of the eukaryotic translation initiation factor 3 (eIF-3) complex.

It is found in the cytoplasm. Its function is as follows. Component of the eukaryotic translation initiation factor 3 (eIF-3) complex, which is involved in protein synthesis of a specialized repertoire of mRNAs and, together with other initiation factors, stimulates binding of mRNA and methionyl-tRNAi to the 40S ribosome. The eIF-3 complex specifically targets and initiates translation of a subset of mRNAs involved in cell proliferation. The chain is Eukaryotic translation initiation factor 3 subunit F from Caenorhabditis elegans.